The primary structure comprises 59 residues: Large ribosomal subunit protein uL30 (59 aa).

It belongs to the universal ribosomal protein uL30 family. As to quaternary structure, part of the 50S ribosomal subunit.

This chain is Large ribosomal subunit protein uL30, found in Geotalea uraniireducens (strain Rf4) (Geobacter uraniireducens).